The primary structure comprises 311 residues: Dehydrogenase/reductase SDR family member 7C (311 aa).

Positions 1–18 (MGIMAVLMLPLLLLGVSG) are cleaved as a signal peptide. Residues serine 47, leucine 49, tyrosine 191, lysine 195, and serine 226 each contribute to the NAD(+) site. Tyrosine 191 acts as the Proton acceptor in catalysis.

This sequence belongs to the short-chain dehydrogenases/reductases (SDR) family. Expressed in skeletal muscle, cardiac muscle and skin.

It is found in the sarcoplasmic reticulum membrane. The catalysed reaction is all-trans-retinol + NAD(+) = all-trans-retinal + NADH + H(+). In terms of biological role, NADH-dependent oxidoreductase which catalyzes the oxidation of all-trans-retinol to all-trans-retinal. Plays a role in the regulation of cardiac and skeletal muscle metabolic functions. Maintains Ca(2+) intracellular homeostasis by repressing Ca(2+) release from the sarcoplasmic reticulum (SR) in myotubes, possibly through local alternations in NAD/NADH or retinol/retinal. Also plays a role in Ca(2+) homeostasis by controlling Ca(2+) overload in the cytosol and the SR in myotubes. Involved in glucose uptake into skeletal muscles and muscle performance by activating PI3K and mTORC2-mediated AKT1 phosphorylation signaling pathways, possibly through the action of its downstream catalytic product all-trans-retinoic acid. The polypeptide is Dehydrogenase/reductase SDR family member 7C (Rattus norvegicus (Rat)).